Consider the following 47-residue polypeptide: RGSVDYKDDDDKTISCTNPKQCYPHCKKETGYPNAKCMNRKCKCFGR.

The N-terminal stretch at 1-12 is a signal peptide; sequence RGSVDYKDDDDK. Cystine bridges form between cysteine 16/cysteine 37, cysteine 22/cysteine 42, and cysteine 26/cysteine 44.

The protein belongs to the short scorpion toxin superfamily. Potassium channel inhibitor family. Alpha-KTx 07 subfamily. In terms of tissue distribution, expressed by the venom gland.

Its subcellular location is the secreted. Potent inhibitor of the A-type voltage-gated potassium channels. Most potent inhibitor of Kv1.2/KCNA2 channels. Reversibly block the Shaker B potassium-channels (Kv1.1 sub-family). This Pandinus imperator (Emperor scorpion) protein is Potassium channel toxin alpha-KTx 7.1 (PTX-1).